The sequence spans 401 residues: Enolase (401 aa).

Q154 is a (2R)-2-phosphoglycerate binding site. The Proton donor role is filled by E196. The Mg(2+) site is built by D232, E275, and D302. K327, R356, S357, and K378 together coordinate (2R)-2-phosphoglycerate. K327 functions as the Proton acceptor in the catalytic mechanism.

The protein belongs to the enolase family. The cofactor is Mg(2+).

It is found in the cytoplasm. Its subcellular location is the secreted. The protein localises to the cell surface. It carries out the reaction (2R)-2-phosphoglycerate = phosphoenolpyruvate + H2O. It functions in the pathway carbohydrate degradation; glycolysis; pyruvate from D-glyceraldehyde 3-phosphate: step 4/5. Functionally, catalyzes the reversible conversion of 2-phosphoglycerate (2-PG) into phosphoenolpyruvate (PEP). It is essential for the degradation of carbohydrates via glycolysis. In Haloarcula marismortui (strain ATCC 43049 / DSM 3752 / JCM 8966 / VKM B-1809) (Halobacterium marismortui), this protein is Enolase.